The sequence spans 1174 residues: PR domain zinc finger protein 15 (1174 aa).

In terms of domain architecture, SET spans 75 to 185; that stretch reads SNLEIRRLDD…AGTELRVWYA (111 aa). Residues 252 to 307 form a disordered region; sequence LPAGGQQHEAASEKEPDAPRMEPPTAAESKSIQSVMVTKEPKKKPRRGRKPKASKV. Basic and acidic residues predominate over residues 261 to 271; the sequence is AASEKEPDAPR. Residues 292–304 show a composition bias toward basic residues; sequence PKKKPRRGRKPKA. C2H2-type zinc fingers lie at residues 402 to 424 and 434 to 457; these read HQCG…VRSH and FKCE…SYKH. The C2H2-type 3; degenerate zinc finger occupies 468-486; that stretch reads YRCGSCGKTFRMESALEFH. C2H2-type zinc fingers lie at residues 495 to 517 and 522 to 544; these read FQCE…KKKH and FACE…QRRH. Lysine 552 is covalently cross-linked (Glycyl lysine isopeptide (Lys-Gly) (interchain with G-Cter in SUMO2)). 2 consecutive C2H2-type zinc fingers follow at residues 571-593 and 598-620; these read SGCP…LLTH and YTCE…IHVH. The disordered stretch occupies residues 639–658; sequence IGISSEENDDNSDESADSEP. Residues 644-655 show a composition bias toward acidic residues; it reads EENDDNSDESAD. 8 C2H2-type zinc fingers span residues 661–684, 689–711, 725–747, 753–775, 781–803, 809–831, 837–859, and 865–888; these read YSCK…MEVH, HGCS…MVIH, HPCE…KLIH, HACE…MRVH, YLCA…MKLH, YECK…YKRH, FMCE…KLIH, and WTCS…QLTH. Disordered stretches follow at residues 957–1007 and 1147–1174; these read AEGK…GDET and LQPP…MYSY. Positions 962-973 are enriched in basic residues; the sequence is GKAAKRSHKRKQ. The segment covering 1154-1174 has biased composition (low complexity); that stretch reads AAPQQAVQPQVQNEQQQMYSY.

Expressed in embryonic stem cells (ESCs) (at protein level).

It localises to the nucleus. Its function is as follows. Sequence-specific DNA-binding transcriptional regulator. Plays a role as a molecular node in a transcriptional network regulating embryonic development and cell fate decision. Stimulates the expression of upstream key transcriptional activators and repressors of the Wnt/beta-catenin and MAPK/ERK pathways, respectively, that are essential for naive pluripotency and self-renewal maintenance of embryonic stem cells (ESCs). Specifically promotes SPRY1 and RSPO1 transcription activation through recognition and direct binding of a specific DNA sequence in their promoter regions. Also plays a role in induced pluripotent stem cells (iPSCs) reprogramming. Involved in early embryo development. The sequence is that of PR domain zinc finger protein 15 from Mus musculus (Mouse).